We begin with the raw amino-acid sequence, 207 residues long: Porin MspD (207 aa).

The N-terminal stretch at 1–24 (MRYLVMMFALLVSVTLVSPRPANA) is a signal peptide.

This sequence belongs to the mycobacterial porin (TC 1.B.24) family. Octamers. Probably forms a goblet with the wide end on the exterior of the outer membrane and a central channel. It is not known if mixed oligomers of MspD with other Msp subunits form in vivo.

Its subcellular location is the cell outer membrane. It localises to the secreted. It is found in the cell wall. In terms of biological role, a backup porin induced when MspA, the major porin, is deleted. It probably forms a water-filled channel which favors the permeation of cations. There are about 2400 porins in wild-type, 800 in an mspA deletion and 150 in a double mspA-mspC deletion. This chain is Porin MspD (mspD), found in Mycolicibacterium smegmatis (strain ATCC 700084 / mc(2)155) (Mycobacterium smegmatis).